A 304-amino-acid polypeptide reads, in one-letter code: MSAQDLSPSRRSIPEPRAMLELIKPVTWFPPMWAYLCGAVSSNVPIWENKGVVVLGIVLAGPIVCGMSQAANDWCDRHVDAINEPHRPIPSGRIPGLWGLYIAIAMSLLSLVVGWQLGSWGFVATLLGVAAAWAYSVEPIRLKRSGWWGPGLVGLAYEGLPWITGAAVLLATADTSPGFPIVMMATLYALGAHGIMTINDFKAIEGDRKLGIKSLPAVYGPEVAAKIACTVMGLAQALVITMLYLFSKPYHATAVLVLLCGQFWAMSVWMRDPEGKAPWYNGTGVVMYVSGMMITAFAIRGFTV.

The next 9 membrane-spanning stretches (helical) occupy residues 26 to 46 (VTWF…NVPI), 51 to 71 (GVVV…SQAA), 94 to 114 (IPGL…LVVG), 117 to 137 (LGSW…AYSV), 151 to 171 (GLVG…VLLA), 178 to 198 (GFPI…IMTI), 227 to 247 (IACT…YLFS), 250 to 270 (YHAT…SVWM), and 279 to 299 (WYNG…AFAI).

The protein localises to the cell membrane. It functions in the pathway porphyrin-containing compound metabolism; bacteriochlorophyll biosynthesis (light-independent). In terms of biological role, catalyzes the esterification of bacteriochlorophyllide a by geranylgeraniol-PPi. This Rhodobacter capsulatus (strain ATCC BAA-309 / NBRC 16581 / SB1003) protein is Bacteriochlorophyll synthase 33 kDa chain (bchG).